The primary structure comprises 730 residues: Elongation factor 2 (730 aa).

The tr-type G domain occupies 19 to 229; it reads DYIRNIGIVA…NITFKDIIQY (211 aa). GTP-binding positions include 28–35, 94–98, and 148–151; these read AHIDHGKT, DTPGH, and NKVD. The residue at position 597 (histidine 597) is a Diphthamide.

It belongs to the TRAFAC class translation factor GTPase superfamily. Classic translation factor GTPase family. EF-G/EF-2 subfamily.

It is found in the cytoplasm. Catalyzes the GTP-dependent ribosomal translocation step during translation elongation. During this step, the ribosome changes from the pre-translocational (PRE) to the post-translocational (POST) state as the newly formed A-site-bound peptidyl-tRNA and P-site-bound deacylated tRNA move to the P and E sites, respectively. Catalyzes the coordinated movement of the two tRNA molecules, the mRNA and conformational changes in the ribosome. The polypeptide is Elongation factor 2 (Methanosphaera stadtmanae (strain ATCC 43021 / DSM 3091 / JCM 11832 / MCB-3)).